The sequence spans 505 residues: L-arabinose isomerase (505 aa).

Glu308, Glu335, His352, and His453 together coordinate Mn(2+).

Belongs to the arabinose isomerase family. The cofactor is Mn(2+).

It catalyses the reaction beta-L-arabinopyranose = L-ribulose. The protein operates within carbohydrate degradation; L-arabinose degradation via L-ribulose; D-xylulose 5-phosphate from L-arabinose (bacterial route): step 1/3. Catalyzes the conversion of L-arabinose to L-ribulose. This chain is L-arabinose isomerase, found in Bifidobacterium animalis subsp. lactis (strain AD011).